The sequence spans 1613 residues: Reverse gyrase (1613 aa).

The RG N-terminal-type zinc finger occupies 1–38 (MIPMIYKEMCPNCNGEITSERLAIGVCEKCLKEENVFE). The Zn(2+) site is built by Cys10, Cys13, Cys27, and Cys30. ATP-binding positions include Gln83 and 100–107 (VPTGVGKS). The Helicase ATP-binding domain maps to 87-291 (AKRVLKNKSF…LYRELLDFEI (205 aa)). A DEAD box motif is present at residues 203–206 (DDVD). One can recognise a Helicase C-terminal domain in the interval 310–525 (SKEKILEYIK…IDEVNLEELI (216 aa)). Positions 546-1613 (DLLKSVLMVV…ALHEEILSIR (1068 aa)) are topoisomerase I. In terms of domain architecture, Toprim spans 550–712 (SVLMVVESPN…NIYRVGFNEI (163 aa)). Mg(2+)-binding residues include Glu556 and Asp681. Residues 733–1613 (DENKVKGQVV…ALHEEILSIR (881 aa)) form the Topo IA-type catalytic domain. Residues 1070–1199 (FAGLVLGDGS…IGIYLNSIGI (130 aa)) form the DOD-type homing endonuclease domain. The active-site O-(5'-phospho-DNA)-tyrosine intermediate is Tyr1363.

In the N-terminal section; belongs to the DEAD box helicase family. DDVD subfamily. The protein in the C-terminal section; belongs to the type IA topoisomerase family. Monomer. Requires Zn(2+) as cofactor. Mg(2+) is required as a cofactor. In terms of processing, this protein undergoes a protein self splicing that involves a post-translational excision of the intervening region (intein) followed by peptide ligation.

Its subcellular location is the cytoplasm. It catalyses the reaction ATP + H2O = ADP + phosphate + H(+). Functionally, modifies the topological state of DNA by introducing positive supercoils in an ATP-dependent process, increasing the linking number in steps of +1. Binds to single-stranded DNA, transiently cleaves and then rejoins the ends, introducing a positive supercoil in the process. The scissile phosphodiester is attacked by the catalytic tyrosine of the enzyme, resulting in the formation of a DNA-(5'-phosphotyrosyl)-enzyme intermediate. Probably involved in rewinding DNA strands in regions of the chromosome that have opened up to allow replication, transcription, DNA repair and/or for DNA protection. The sequence is that of Reverse gyrase from Methanocaldococcus jannaschii (strain ATCC 43067 / DSM 2661 / JAL-1 / JCM 10045 / NBRC 100440) (Methanococcus jannaschii).